Consider the following 362-residue polypeptide: tRNA-specific 2-thiouridylase MnmA (362 aa).

ATP-binding positions include 6 to 13 and L32; that span reads AMSGGVDS. The Nucleophile role is filled by C101. An intrachain disulfide couples C101 to C197. G125 is a binding site for ATP. The interaction with tRNA stretch occupies residues 147–149; it reads KDQ. The Cysteine persulfide intermediate role is filled by C197.

Belongs to the MnmA/TRMU family.

It localises to the cytoplasm. It carries out the reaction S-sulfanyl-L-cysteinyl-[protein] + uridine(34) in tRNA + AH2 + ATP = 2-thiouridine(34) in tRNA + L-cysteinyl-[protein] + A + AMP + diphosphate + H(+). In terms of biological role, catalyzes the 2-thiolation of uridine at the wobble position (U34) of tRNA, leading to the formation of s(2)U34. This chain is tRNA-specific 2-thiouridylase MnmA, found in Saccharopolyspora erythraea (strain ATCC 11635 / DSM 40517 / JCM 4748 / NBRC 13426 / NCIMB 8594 / NRRL 2338).